Here is a 136-residue protein sequence, read N- to C-terminus: MLQPVRTKYRKAHKGRIHGTATRASKINYGSFALKAMAPERIIGKQIEAARVALTRHMKRQGRVWTRIFPNIPVSKKPVEVRMGKGKGAPEYWACRVKPGRILFEIDGVSETIAKEALYKASAKLPIKTKFIKRFA.

This sequence belongs to the universal ribosomal protein uL16 family. In terms of assembly, part of the 50S ribosomal subunit.

Its function is as follows. Binds 23S rRNA and is also seen to make contacts with the A and possibly P site tRNAs. The protein is Large ribosomal subunit protein uL16 of Pelagibacter ubique (strain HTCC1062).